The sequence spans 428 residues: FAD-dependent monooxygenase kojA (428 aa).

Residues R52 to P60 and S328 to V329 contribute to the FAD site.

It belongs to the aromatic-ring hydroxylase family. FAD is required as a cofactor.

In terms of biological role, probable FAD-dependent monooxygenase; part of the gene cluster that mediates the biosynthesis of 5-hydroxy-2-hydroxymethyl-1,4-pyrone, also know as kojic acid, a by-product in the fermentation process of malting rice that acts as a chelation agent. Glucose might be converted to kojic acid by a combination of dehydrogenase and dehydratase reactions involving kojA and probably additional enzymes. The chain is FAD-dependent monooxygenase kojA from Aspergillus flavus (strain ATCC 200026 / FGSC A1120 / IAM 13836 / NRRL 3357 / JCM 12722 / SRRC 167).